A 223-amino-acid polypeptide reads, in one-letter code: Ethylene-inducing xylanase (223 aa).

The first 19 residues, 1-19 (MVSFTTLLAGFVAVTGVLS), serve as a signal peptide directing secretion. Positions 34 to 223 (QTIGPGTGFN…SSGNANINVS (190 aa)) constitute a GH11 domain. The N-linked (GlcNAc...) asparagine glycan is linked to N94. The active-site Nucleophile is the E119. E210 serves as the catalytic Proton donor.

Belongs to the glycosyl hydrolase 11 (cellulase G) family. In terms of assembly, interactc with tomato LeEix2 receptor to trigger its internalization.

It localises to the secreted. The enzyme catalyses Endohydrolysis of (1-&gt;4)-beta-D-xylosidic linkages in xylans.. It functions in the pathway glycan degradation; xylan degradation. Functionally, endo-1,4-beta-xylanase involved in the hydrolysis of xylan, a major structural heterogeneous polysaccharide found in plant biomass representing the second most abundant polysaccharide in the biosphere, after cellulose. Acts as an elicitor of plant defense responses in hosts such as tobacco (Nicotiana tabacum) or tomato (Solanum lycopersicum). Induces the production of ethylene and leads alterations in membrane function with rapid efflux of potassium, uptake of calcium, alkalization of the medium, increased leakage of cellular components and necrosis in plant hosts. EIX is translocated through the xylem of the host plant to the leaf mesophyll, leading to host response to pathogen-derived extracellular proteins in tissues distant from the invading pathogen. Greatly enhances the expression of two calcineurin B-like proteins-interacting protein kinases (CIPKs) family members, OsCIPK14 and OsCIPK15, in rice cultured cells. In tomato, triggers the defense response via binding to and subsequent internalization of the LeEix2 receptor. This is Ethylene-inducing xylanase from Hypocrea rufa (Trichoderma viride).